The primary structure comprises 453 residues: Secreted triacylglycerol lipase LIP2 (453 aa).

The first 19 residues, 1-19 (MKLSLVVLTLISVAAQALA), serve as a signal peptide directing secretion. A glycan (N-linked (GlcNAc...) asparagine) is linked at asparagine 98. Residues cysteine 115 and cysteine 284 are joined by a disulfide bond. The Nucleophile role is filled by serine 197. An N-linked (GlcNAc...) asparagine glycan is attached at asparagine 230. Residues aspartate 344 and histidine 378 contribute to the active site. A disulfide bridge connects residues cysteine 360 and cysteine 406.

It belongs to the AB hydrolase superfamily. Lipase family. Class Lip subfamily.

It localises to the secreted. It carries out the reaction a triacylglycerol + H2O = a diacylglycerol + a fatty acid + H(+). The enzyme catalyses a monoacylglycerol + H2O = glycerol + a fatty acid + H(+). The catalysed reaction is a diacylglycerol + H2O = a monoacylglycerol + a fatty acid + H(+). Its activity is regulated as follows. The activity is significantly increased in the presence of Triton X-100 and partially inhibited by PMSF but unaffected by univalent and divalent metal ions. Activity is significantly decreased in acetate buffer compared to that in citrate buffer at the same pH. Its function is as follows. Major secreted lipase involved in Dandruff and seborrheic dermatitis (D/SD) probably via lipase-mediated breakdown of sebaceous lipids and release of irritating free fatty acids. Has triacylglycerol lipase activity and is able to hydrolyze triolein, tristearin, trilinolein, tripalmitoylglycerol and trihexadecenoin. Hydrolyze diacylglycerols such as distearin, dilinolein, dipalmitoylglycerol and dipalmitolein. Shows high esterase activity against 4-nitrophenyl palmitate and 1-naphthyl palmitate but not 1-naphthyl acetate, suggesting that it specifically recognizes fatty acids. Mostly converts monoolein to di- and triolein, while free fatty acids are only produced in low amounts. The chain is Secreted triacylglycerol lipase LIP2 from Malassezia globosa (strain ATCC MYA-4612 / CBS 7966) (Dandruff-associated fungus).